We begin with the raw amino-acid sequence, 168 residues long: Small ribosomal subunit protein uS9 (168 aa).

The segment covering 1–29 has biased composition (low complexity); it reads MAQNEELTAEAVEAEETLTSYTSESTSAE. The segment at 1-36 is disordered; it reads MAQNEELTAEAVEAEETLTSYTSESTSAEDAPKKER.

It belongs to the universal ribosomal protein uS9 family.

The protein is Small ribosomal subunit protein uS9 of Paenarthrobacter aurescens (strain TC1).